The sequence spans 157 residues: 2-C-methyl-D-erythritol 2,4-cyclodiphosphate synthase (157 aa).

Asp-9 and His-11 together coordinate a divalent metal cation. 4-CDP-2-C-methyl-D-erythritol 2-phosphate-binding positions include 9 to 11 (DVH) and 35 to 36 (HS). His-43 contacts a divalent metal cation. 4-CDP-2-C-methyl-D-erythritol 2-phosphate-binding positions include 57–59 (DIG), 62–66 (FPDTD), 101–107 (AEKPKMA), 133–136 (TTTE), Phe-140, and Arg-143.

It belongs to the IspF family. In terms of assembly, homotrimer. Requires a divalent metal cation as cofactor.

It catalyses the reaction 4-CDP-2-C-methyl-D-erythritol 2-phosphate = 2-C-methyl-D-erythritol 2,4-cyclic diphosphate + CMP. Its pathway is isoprenoid biosynthesis; isopentenyl diphosphate biosynthesis via DXP pathway; isopentenyl diphosphate from 1-deoxy-D-xylulose 5-phosphate: step 4/6. Functionally, involved in the biosynthesis of isopentenyl diphosphate (IPP) and dimethylallyl diphosphate (DMAPP), two major building blocks of isoprenoid compounds. Catalyzes the conversion of 4-diphosphocytidyl-2-C-methyl-D-erythritol 2-phosphate (CDP-ME2P) to 2-C-methyl-D-erythritol 2,4-cyclodiphosphate (ME-CPP) with a corresponding release of cytidine 5-monophosphate (CMP). This chain is 2-C-methyl-D-erythritol 2,4-cyclodiphosphate synthase, found in Listeria monocytogenes serotype 4b (strain CLIP80459).